We begin with the raw amino-acid sequence, 186 residues long: Inner membrane-spanning protein YciB (186 aa).

5 helical membrane passes run 10–30 (IILF…AVAI), 47–67 (VEPL…ATLL), 76–96 (WKPT…QLMF), 121–141 (WGWT…AYHF), and 149–169 (FKLF…ALYL).

The protein belongs to the YciB family.

It localises to the cell inner membrane. Plays a role in cell envelope biogenesis, maintenance of cell envelope integrity and membrane homeostasis. In Acidovorax ebreus (strain TPSY) (Diaphorobacter sp. (strain TPSY)), this protein is Inner membrane-spanning protein YciB.